Consider the following 292-residue polypeptide: 4-hydroxy-tetrahydrodipicolinate synthase (292 aa).

Thr45 contacts pyruvate. Tyr133 functions as the Proton donor/acceptor in the catalytic mechanism. Lys161 (schiff-base intermediate with substrate) is an active-site residue. Ile203 is a binding site for pyruvate.

It belongs to the DapA family. Homotetramer; dimer of dimers.

It is found in the cytoplasm. The enzyme catalyses L-aspartate 4-semialdehyde + pyruvate = (2S,4S)-4-hydroxy-2,3,4,5-tetrahydrodipicolinate + H2O + H(+). Its pathway is amino-acid biosynthesis; L-lysine biosynthesis via DAP pathway; (S)-tetrahydrodipicolinate from L-aspartate: step 3/4. In terms of biological role, catalyzes the condensation of (S)-aspartate-beta-semialdehyde [(S)-ASA] and pyruvate to 4-hydroxy-tetrahydrodipicolinate (HTPA). The polypeptide is 4-hydroxy-tetrahydrodipicolinate synthase (Salmonella paratyphi A (strain AKU_12601)).